Here is a 259-residue protein sequence, read N- to C-terminus: Kynurenine formamidase (259 aa).

The short motif at 34–38 (HGGAW) is the HGGXW element. The Nucleophile role is filled by serine 103. Residues aspartate 196 and histidine 228 contribute to the active site.

Belongs to the kynurenine formamidase family. As to quaternary structure, homodimer.

The enzyme catalyses N-formyl-L-kynurenine + H2O = L-kynurenine + formate + H(+). It functions in the pathway amino-acid degradation; L-tryptophan degradation via kynurenine pathway; L-kynurenine from L-tryptophan: step 2/2. Functionally, catalyzes the hydrolysis of N-formyl-L-kynurenine to L-kynurenine, the second step in the kynurenine pathway of tryptophan degradation. Kynurenine may be further oxidized to nicotinic acid, NAD(H) and NADP(H). Required for elimination of toxic metabolites. This chain is Kynurenine formamidase, found in Meyerozyma guilliermondii (strain ATCC 6260 / CBS 566 / DSM 6381 / JCM 1539 / NBRC 10279 / NRRL Y-324) (Yeast).